Here is a 369-residue protein sequence, read N- to C-terminus: Protein VP6 (369 aa).

The disordered stretch occupies residues 20–208 (LEQRSIAPLL…EEAKVGGGDR (189 aa)). The segment covering 29-66 (LREKNSTEAKSKLKEDGEKKNKSEKEENKIHDDRRVES) has biased composition (basic and acidic residues). 2 stretches are compositionally biased toward gly residues: residues 92–111 (TGGG…GGVG) and 162–171 (TSGGLQGRGG). The span at 196-208 (TEGEEAKVGGGDR) shows a compositional bias: basic and acidic residues.

The protein belongs to the orbivirus VP6 family.

The protein resides in the virion. The protein is Protein VP6 (S9) of African horse sickness virus 3 (AHSV-3).